The following is a 1257-amino-acid chain: Phosphatidylinositol 3,4,5-trisphosphate 5-phosphatase 2 (1257 aa).

One can recognise an SH2 domain in the interval 21–117; the sequence is WYHRDLSRAA…GLVCALLLPV (97 aa). The segment covering 119–132 has biased composition (basic and acidic residues); sequence GEREPDPPDDRDAS. A disordered region spans residues 119–181; it reads GEREPDPPDD…ESTPNGLSTV (63 aa). A Phosphoserine modification is found at S132. The segment covering 156–166 has biased composition (pro residues); sequence PSSPLPAPETP. At T165 the chain carries Phosphothreonine. A phosphoserine mark is found at S241 and S353. Y887 carries the phosphotyrosine modification. A Phosphoserine modification is found at S891. Positions 897-986 are disordered; the sequence is TGAKSKAPSV…PPKNSFNNPA (90 aa). Pro residues predominate over residues 939 to 951; the sequence is PPPTGRPPAPPRA. Positions 945 to 950 match the SH3-binding motif; that stretch reads PPAPPR. The segment covering 952-966 has biased composition (basic and acidic residues); that stretch reads VPREESLNPRLKSEG. Positions 984–987 match the NPXY motif motif; sequence NPAY. Y987 carries the post-translational modification Phosphotyrosine. The disordered stretch occupies residues 1004–1115; sequence SFARAPIPPT…PASTFLEEVA (112 aa). Pro residues-rich tracts occupy residues 1049–1060 and 1088–1104; these read LPPPDFPPPPLP and GPPP…PPGT. The residue at position 1132 (S1132) is a Phosphoserine. Y1136 and Y1161 each carry phosphotyrosine. An SAM domain is found at 1195-1257; sequence LGEAGMGAWL…LLLDTLQLSK (63 aa). The residue at position 1256 (S1256) is a Phosphoserine.

This sequence belongs to the inositol 1,4,5-trisphosphate 5-phosphatase family. Interacts with tyrosine phosphorylated form of SHC1. Interacts with EGFR. Upon stimulation by the EGF signaling pathway, it forms a complex with SHC1 and EGFR. Interacts with cytoskeletal protein SORBS3/vinexin, promoting its localization to the periphery of cells. Forms a complex with filamin (FLNA or FLNB), actin, GPIb (GP1BA or GP1BB) that regulates cortical and submembraneous actin. Interacts with c-Met/MET, when c-Met/MET is phosphorylated on 'Tyr-1356'. Interacts with p130Cas/BCAR1. Interacts with CENTD3/ARAP3 via its SAM domain. Interacts with c-Cbl/CBL and CAP/SORBS1. Interacts with activated EPHA2 receptor. Interacts with receptors FCGR2A. Interacts with FCGR2B. Interacts with tyrosine kinase ABL1. Interacts with tyrosine kinase TEC. Interacts with CSF1R. Interacts (via N-terminus) with SH3YL1 (via SH3 domain). Interacts (via SH2 domain) with tyrosine phosphorylated KLRC1 (via ITIM). Interacts with NEDD9/HEF1. In terms of processing, tyrosine phosphorylated by the members of the SRC family after exposure to a diverse array of extracellular stimuli such as insulin, growth factors such as EGF or PDGF, chemokines, integrin ligands and hypertonic and oxidative stress. May be phosphorylated upon IgG receptor FCGR2B-binding. Phosphorylated at Tyr-987 following cell attachment and spreading. Phosphorylated at Tyr-1161 following EGF signaling pathway stimulation.

It is found in the cytoplasm. The protein resides in the cytosol. It localises to the cytoskeleton. The protein localises to the membrane. Its subcellular location is the cell projection. It is found in the filopodium. The protein resides in the lamellipodium. It localises to the basal cell membrane. The protein localises to the nucleus. Its subcellular location is the nucleus speckle. It is found in the spindle pole. The catalysed reaction is a 1,2-diacyl-sn-glycero-3-phospho-(1D-myo-inositol-3,4,5-trisphosphate) + H2O = a 1,2-diacyl-sn-glycero-3-phospho-(1D-myo-inositol-3,4-bisphosphate) + phosphate. The enzyme catalyses 1,2-dioctanoyl-sn-glycero-3-phospho-(1D-myo-inositol-3,4,5-trisphosphate) + H2O = 1,2-dioctanoyl-sn-glycero-3-phospho-(1D-myo-inositol-3,4-bisphosphate) + phosphate. It carries out the reaction 1,2-dihexadecanoyl-sn-glycero-3-phospho-(1D-myo-inositol-3,4,5-trisphosphate) + H2O = 1,2-dihexadecanoyl-sn-glycero-3-phospho-(1D-myo-inositol-3,4-bisphosphate) + phosphate. Activated upon translocation to the sites of synthesis of PtdIns(3,4,5)P3 in the membrane. Enzymatic activity is enhanced in the presence of phosphatidylserine. Phosphatidylinositol (PtdIns) phosphatase that specifically hydrolyzes the 5-phosphate of phosphatidylinositol-3,4,5-trisphosphate (PtdIns(3,4,5)P3) to produce PtdIns(3,4)P2, thereby negatively regulating the PI3K (phosphoinositide 3-kinase) pathways. Required for correct mitotic spindle orientation and therefore progression of mitosis. Plays a central role in regulation of PI3K-dependent insulin signaling, although the precise molecular mechanisms and signaling pathways remain unclear. While overexpression reduces both insulin-stimulated MAP kinase and Akt activation, its absence does not affect insulin signaling or GLUT4 trafficking. Confers resistance to dietary obesity. May act by regulating AKT2, but not AKT1, phosphorylation at the plasma membrane. Part of a signaling pathway that regulates actin cytoskeleton remodeling. Required for the maintenance and dynamic remodeling of actin structures as well as in endocytosis, having a major impact on ligand-induced EGFR internalization and degradation. Participates in regulation of cortical and submembraneous actin by hydrolyzing PtdIns(3,4,5)P3 thereby regulating membrane ruffling. Regulates cell adhesion and cell spreading. Required for HGF-mediated lamellipodium formation, cell scattering and spreading. Acts as a negative regulator of EPHA2 receptor endocytosis by inhibiting via PI3K-dependent Rac1 activation. Acts as a regulator of neuritogenesis by regulating PtdIns(3,4,5)P3 level and is required to form an initial protrusive pattern, and later, maintain proper neurite outgrowth. Acts as a negative regulator of the FC-gamma-RIIA receptor (FCGR2A). Mediates signaling from the FC-gamma-RIIB receptor (FCGR2B), playing a central role in terminating signal transduction from activating immune/hematopoietic cell receptor systems. Involved in EGF signaling pathway. Upon stimulation by EGF, it is recruited by EGFR and dephosphorylates PtdIns(3,4,5)P3. Plays a negative role in regulating the PI3K-PKB pathway, possibly by inhibiting PKB activity. Down-regulates Fc-gamma-R-mediated phagocytosis in macrophages independently of INPP5D/SHIP1. In macrophages, down-regulates NF-kappa-B-dependent gene transcription by regulating macrophage colony-stimulating factor (M-CSF)-induced signaling. Plays a role in the localization of AURKA and NEDD9/HEF1 to the basolateral membrane at interphase in polarized cysts, thereby mediates cell cycle homeostasis, cell polarization and cilia assembly. Additionally promotion of cilia growth is also facilitated by hydrolysis of (PtdIns(3,4,5)P3) to PtdIns(3,4)P2. Promotes formation of apical membrane-initiation sites during the initial stages of lumen formation via Rho family-induced actin filament organization and CTNNB1 localization to cell-cell contacts. May also hydrolyze PtdIns(1,3,4,5)P4, and could thus affect the levels of the higher inositol polyphosphates like InsP6. Involved in endochondral ossification. The chain is Phosphatidylinositol 3,4,5-trisphosphate 5-phosphatase 2 from Rattus norvegicus (Rat).